A 412-amino-acid polypeptide reads, in one-letter code: Hyaluronidase-3 (412 aa).

A signal peptide spans 1–22 (MITQLGLTLVVGLTLCLVHVQA). 5 disulfides stabilise this stretch: Cys-42–Cys-332, Cys-206–Cys-221, Cys-357–Cys-368, Cys-362–Cys-396, and Cys-398–Cys-407. Residue Asn-69 is glycosylated (N-linked (GlcNAc...) asparagine). Catalysis depends on Glu-129, which acts as the Proton donor. A glycan (N-linked (GlcNAc...) asparagine) is linked at Asn-216. Residues 353–408 (AATACSHQRCHGHGRCSWKDPGQMEAFLHLQPDDNLGAWKSFRCRCYLGWSGPTCL) enclose the EGF-like domain.

It belongs to the glycosyl hydrolase 56 family. N-glycosylated.

It is found in the secreted. The protein resides in the cell membrane. Its subcellular location is the cytoplasmic vesicle. It localises to the secretory vesicle. The protein localises to the acrosome. It is found in the endoplasmic reticulum. The protein resides in the early endosome. The enzyme catalyses Random hydrolysis of (1-&gt;4)-linkages between N-acetyl-beta-D-glucosamine and D-glucuronate residues in hyaluronate.. Functionally, facilitates sperm penetration into the layer of cumulus cells surrounding the egg by digesting hyaluronic acid. Involved in induction of the acrosome reaction in the sperm. Involved in follicular atresia, the breakdown of immature ovarian follicles that are not selected to ovulate. Induces ovarian granulosa cell apoptosis, possibly via apoptotic signaling pathway involving CASP8 and CASP3 activation, and poly(ADP-ribose) polymerase (PARP) cleavage. Has no hyaluronidase activity in embryonic fibroblasts in vitro. Has no hyaluronidase activity in granulosa cells in vitro. The chain is Hyaluronidase-3 (Hyal3) from Rattus norvegicus (Rat).